The chain runs to 318 residues: MIQPMASPSNSSTVPVSEFLLICFPNFQSWQHWLSLPLSLLFLLAMGANTTLLITIQLEASLHQPLYYLLSLLSLLDIVLCLTVIPKVLAIFWYDLRSISFPACFLQMFIMNSFLPMESCTFMVMAYDRYVAICHPLRYPSIITNQFVAKASVFIVVRNALLTAPIPILTSLLHYCGENVIENCICANLSVSRLSCDNFTLNRIYQFVAGWTLLGSDLFLIFLSYTFILRAVLRFKAEGAAVKALSTCGSHFILILFFSTILLVVVLTNVARKKVPMDILILLNVLHHLIPPALNPIVYGVRTKEIKQGIQKLLQRGR.

The Extracellular segment spans residues 1-32 (MIQPMASPSNSSTVPVSEFLLICFPNFQSWQH). N-linked (GlcNAc...) asparagine glycosylation occurs at N10. A helical transmembrane segment spans residues 33 to 53 (WLSLPLSLLFLLAMGANTTLL). The Cytoplasmic portion of the chain corresponds to 54–61 (ITIQLEAS). A helical transmembrane segment spans residues 62–82 (LHQPLYYLLSLLSLLDIVLCL). Topologically, residues 83–106 (TVIPKVLAIFWYDLRSISFPACFL) are extracellular. A disulfide bond links C104 and C196. The chain crosses the membrane as a helical span at residues 107–127 (QMFIMNSFLPMESCTFMVMAY). At 128-146 (DRYVAICHPLRYPSIITNQ) the chain is on the cytoplasmic side. The chain crosses the membrane as a helical span at residues 147-167 (FVAKASVFIVVRNALLTAPIP). At 168–203 (ILTSLLHYCGENVIENCICANLSVSRLSCDNFTLNR) the chain is on the extracellular side. Residues N188 and N198 are each glycosylated (N-linked (GlcNAc...) asparagine). A helical transmembrane segment spans residues 204 to 224 (IYQFVAGWTLLGSDLFLIFLS). Topologically, residues 225–244 (YTFILRAVLRFKAEGAAVKA) are cytoplasmic. Residues 245 to 265 (LSTCGSHFILILFFSTILLVV) traverse the membrane as a helical segment. The Extracellular portion of the chain corresponds to 266–280 (VLTNVARKKVPMDIL). A helical membrane pass occupies residues 281-301 (ILLNVLHHLIPPALNPIVYGV). At 302–318 (RTKEIKQGIQKLLQRGR) the chain is on the cytoplasmic side.

It belongs to the G-protein coupled receptor 1 family.

The protein resides in the cell membrane. Functionally, odorant receptor. The protein is Olfactory receptor 56A1 (OR56A1) of Homo sapiens (Human).